We begin with the raw amino-acid sequence, 101 residues long: Small ribosomal subunit protein eS24 (101 aa).

Belongs to the eukaryotic ribosomal protein eS24 family.

This chain is Small ribosomal subunit protein eS24, found in Methanosarcina barkeri (strain Fusaro / DSM 804).